We begin with the raw amino-acid sequence, 339 residues long: DNA-directed RNA polymerase subunit alpha (339 aa).

An alpha N-terminal domain (alpha-NTD) region spans residues 1–235 (MTIQKNWQEL…DQLNVFVNFE (235 aa)). The interval 251–339 (FNPAFLKKVD…ELAKRFEDHY (89 aa)) is alpha C-terminal domain (alpha-CTD).

It belongs to the RNA polymerase alpha chain family. As to quaternary structure, homodimer. The RNAP catalytic core consists of 2 alpha, 1 beta, 1 beta' and 1 omega subunit. When a sigma factor is associated with the core the holoenzyme is formed, which can initiate transcription.

It carries out the reaction RNA(n) + a ribonucleoside 5'-triphosphate = RNA(n+1) + diphosphate. DNA-dependent RNA polymerase catalyzes the transcription of DNA into RNA using the four ribonucleoside triphosphates as substrates. This chain is DNA-directed RNA polymerase subunit alpha, found in Rhodopseudomonas palustris (strain HaA2).